The primary structure comprises 622 residues: DNA polymerase II small subunit (622 aa).

Residues 76-113 (ISTGEGSQKVPDHEELEKITNESSVESSISTGETPKTE) are disordered. A compositionally biased stretch (basic and acidic residues) spans 85–95 (VPDHEELEKIT). The span at 96–109 (NESSVESSISTGET) shows a compositional bias: polar residues.

It belongs to the DNA polymerase delta/II small subunit family. As to quaternary structure, heterodimer of a large subunit and a small subunit.

It carries out the reaction DNA(n) + a 2'-deoxyribonucleoside 5'-triphosphate = DNA(n+1) + diphosphate. It catalyses the reaction Exonucleolytic cleavage in the 3'- to 5'-direction to yield nucleoside 5'-phosphates.. Functionally, possesses two activities: a DNA synthesis (polymerase) and an exonucleolytic activity that degrades single-stranded DNA in the 3' to 5' direction. Has a template-primer preference which is characteristic of a replicative DNA polymerase. The sequence is that of DNA polymerase II small subunit (polB) from Pyrococcus horikoshii (strain ATCC 700860 / DSM 12428 / JCM 9974 / NBRC 100139 / OT-3).